A 515-amino-acid chain; its full sequence is Carboxyl-terminal-processing peptidase 2, chloroplastic (515 aa).

The 89-residue stretch at 198–286 folds into the PDZ domain; sequence FKSLRSGTQG…SAVELAIRSG (89 aa). Residues S417 and K442 each act as charge relay system in the active site.

This sequence belongs to the peptidase S41A family.

The protein resides in the plastid. Its subcellular location is the chloroplast thylakoid lumen. The enzyme catalyses The enzyme shows specific recognition of a C-terminal tripeptide, Xaa-Yaa-Zaa, in which Xaa is preferably Ala or Leu, Yaa is preferably Ala or Tyr, and Zaa is preferably Ala, but then cleaves at a variable distance from the C-terminus. A typical cleavage is -Ala-Ala-|-Arg-Ala-Ala-Lys-Glu-Asn-Tyr-Ala-Leu-Ala-Ala.. Protease involved in the C-terminal processing of the chloroplastic D1 protein of photosystem II. This proteolytic processing is necessary to allow the light-driven assembly of the tetranuclear manganese cluster, which is responsible for photosynthetic water oxidation. The chain is Carboxyl-terminal-processing peptidase 2, chloroplastic (CTPA2) from Arabidopsis thaliana (Mouse-ear cress).